We begin with the raw amino-acid sequence, 322 residues long: MIGTSFPEDLDCGNFFDNMDDLMDFPGGDIDVGFGIGDSDSFPTIWTTHHDTWPAASDPLFSSNTNSDSSPELYVPFEDIVKVERPPSFVEETLVEKKEDSFSTNTDSSSSHSQFRSSSPVSVLESSSSSSQTTNTTSLVLPGKHGRPRTKRPRPPVQDKDRVKDNVCGGDSRLIIRIPKQFLSDHNKMINKKKKKKAKITSSSSSSGIDLEVNGNNVDSYSSEQYPLRKCMHCEVTKTPQWRLGPMGPKTLCNACGVRYKSGRLFPEYRPAASPTFTPALHSNSHKKVAEMRNKRCSDGSYITEENDLQGLIPNNAYIGVD.

The interval 93–168 is disordered; sequence TLVEKKEDSF…DKDRVKDNVC (76 aa). The segment covering 102–141 has biased composition (low complexity); it reads FSTNTDSSSSHSQFRSSSPVSVLESSSSSSQTTNTTSLVL. The segment covering 144–154 has biased composition (basic residues); that stretch reads KHGRPRTKRPR. A Nuclear localization signal motif is present at residues 147-154; sequence RPRTKRPR. The GATA-type zinc-finger motif lies at 225 to 279; sequence QYPLRKCMHCEVTKTPQWRLGPMGPKTLCNACGVRYKSGRLFPEYRPAASPTFTP.

This sequence belongs to the type IV zinc-finger family. Class A subfamily.

It is found in the nucleus. Its function is as follows. Transcriptional activator that specifically binds 5'-GATA-3' or 5'-GAT-3' motifs within gene promoters. May be involved in the regulation of some light-responsive genes. This chain is GATA transcription factor 8 (GATA8), found in Arabidopsis thaliana (Mouse-ear cress).